The primary structure comprises 1274 residues: Enamelin (1274 aa).

Residues 1–38 (MLLLQCRNPTSPPKPCGLVPNVKMSLLVFLGLLGVSAA) form the signal peptide. Positions 103 to 115 (PVPNGWQQPPMPN) are enriched in pro residues. Disordered regions lie at residues 103 to 413 (PVPN…VGAN), 476 to 610 (IGAN…NNPN), 668 to 700 (PFQS…KHFP), 712 to 734 (LPPL…YGSR), and 753 to 814 (YIKS…EEMN). The span at 117–127 (PSKTDQTQETA) shows a compositional bias: polar residues. Residues 128–142 (KPNQTNPQEPQPQKQ) show a composition bias toward low complexity. The N-linked (GlcNAc...) asparagine glycan is linked to N130. The segment covering 143 to 158 (PLKEPPNEAARAKDDA) has biased composition (basic and acidic residues). Residues 174–185 (YPQPPWPIPQRG) show a composition bias toward pro residues. Phosphoserine is present on residues S196 and S219. Residues 225–239 (DYEKPKEKDPPKPED) are compositionally biased toward basic and acidic residues. A compositionally biased stretch (polar residues) spans 249-272 (ASTNSTVPDANATQSIPEGGNDTS). N-linked (GlcNAc...) asparagine glycosylation is found at N252, N259, and N269. Positions 273 to 287 (PIGNTGPGPNAGNNP) are enriched in low complexity. Residue N300 is glycosylated (N-linked (GlcNAc...) asparagine). The segment covering 318–330 (PNIYENYPYPNYP) has biased composition (low complexity). Polar residues-rich tracts occupy residues 331 to 344 (SERQ…QGPR), 486 to 503 (SIGT…TNPA), 522 to 549 (TNPS…QASN), and 565 to 574 (VTVSHNMKTQ). Residues 575 to 587 (NPKEKSLGQKERT) are compositionally biased toward basic and acidic residues. Residues 588-598 (VTPTKDASNPW) show a composition bias toward polar residues. Residues 715–727 (LKEDYGRQDENLR) are compositionally biased toward basic and acidic residues. Positions 753–766 (YIKSNPWDKSSPST) are enriched in polar residues. A compositionally biased stretch (acidic residues) spans 787–801 (QYNEEDPIDPNEDES). N1066 carries an N-linked (GlcNAc...) asparagine glycan. Disordered stretches follow at residues 1071–1097 (KLTA…PYSG) and 1109–1128 (SEAS…DLGG).

In terms of processing, phosphorylated by FAM20C in vitro. In terms of tissue distribution, expressed in developing teeth.

Its subcellular location is the secreted. The protein localises to the extracellular space. It is found in the extracellular matrix. Its function is as follows. Involved in the mineralization and structural organization of enamel. Involved in the extension of enamel during the secretory stage of dental enamel formation. The chain is Enamelin (Enam) from Mus musculus (Mouse).